Consider the following 195-residue polypeptide: Calcineurin B homologous protein 1 (195 aa).

Gly-2 carries N-myristoyl glycine lipidation. Positions Gly-2–Ser-6 match the Necessary for association with microtubule and interaction with GAPDH motif. EF-hand domains lie at Ser-26 to Pro-61, Ile-66 to Asp-101, Ser-110 to Val-145, and Gln-151 to Glu-186. Ca(2+) contacts are provided by Asp-123, Asp-125, Asp-127, Lys-129, and Glu-134. Residues Val-138–Ile-147 carry the Nuclear export signal 1 motif. Residues Val-143–Val-185 are necessary for nuclear export signal. Positions 164, 166, 168, and 175 each coordinate Ca(2+). The Nuclear export signal 2 signature appears at Phe-176–Val-185.

Belongs to the calcineurin regulatory subunit family. CHP subfamily. As to quaternary structure, monomer. Interacts with STK17B; the interaction occurs in a calcium-independent manner and induces the translocation of CHP1 from the Golgi to the nucleus. Interacts with GAPDH; the interaction is direct, occurs in a N-myristoylation-dependent manner and facilitates the ability of CHP1 to bind microtubules. Interacts with KIF1B (via the C-terminal end of the kinesin-motor domain); the interaction occurs in a calcium-dependent manner. Associates (via C-terminal domain) with microtubules; the association occurs with polymerized microtubules during the cell cycle in a myristoylation- and calcium-independent manner and is enhanced by GAPDH. Interacts with PPP3CA. Interacts with SLC9A1/NHE1 (via the C-terminal domain); the interaction occurs at the plasma membrane in a calcium-dependent manner and at a domain that is critical for growth factor stimulation of the exchanger. Interacts with SLC9A3; increases SLC9A3 trafficking and activity at the plasma membrane. Phosphorylated; decreased phosphorylation is associated with an increase in SLC9A1/NHE1 Na(+)/H(+) exchange activity. Phosphorylation occurs in serum-dependent manner. The phosphorylation state may regulate the binding to SLC9A1/NHE1. Post-translationally, both N-myristoylation and calcium-mediated conformational changes are essential for its function in exocytic traffic. N-myristoylation is required for its association with microtubules and interaction with GAPDH, but not for the constitutive association to membranes. Ubiquitously expressed. Has been found in fetal eye, lung, liver, muscle, heart, kidney, thymus and spleen.

Its subcellular location is the nucleus. It localises to the cytoplasm. The protein resides in the cytoskeleton. It is found in the endomembrane system. The protein localises to the endoplasmic reticulum-Golgi intermediate compartment. Its subcellular location is the endoplasmic reticulum. It localises to the cell membrane. The protein resides in the membrane. Its function is as follows. Calcium-binding protein involved in different processes such as regulation of vesicular trafficking, plasma membrane Na(+)/H(+) exchanger and gene transcription. Involved in the constitutive exocytic membrane traffic. Mediates the association between microtubules and membrane-bound organelles of the endoplasmic reticulum and Golgi apparatus and is also required for the targeting and fusion of transcytotic vesicles (TCV) with the plasma membrane. Functions as an integral cofactor in cell pH regulation by controlling plasma membrane-type Na(+)/H(+) exchange activity. Affects the pH sensitivity of SLC9A1/NHE1 by increasing its sensitivity at acidic pH. Required for the stabilization and localization of SLC9A1/NHE1 at the plasma membrane. Inhibits serum- and GTPase-stimulated Na(+)/H(+) exchange. Plays a role as an inhibitor of ribosomal RNA transcription by repressing the nucleolar UBF1 transcriptional activity. May sequester UBF1 in the nucleoplasm and limit its translocation to the nucleolus. Associates to the ribosomal gene promoter. Acts as a negative regulator of the calcineurin/NFAT signaling pathway. Inhibits NFAT nuclear translocation and transcriptional activity by suppressing the calcium-dependent calcineurin phosphatase activity. Also negatively regulates the kinase activity of the apoptosis-induced kinase STK17B. Inhibits both STK17B auto- and substrate-phosphorylations in a calcium-dependent manner. The sequence is that of Calcineurin B homologous protein 1 (CHP1) from Homo sapiens (Human).